We begin with the raw amino-acid sequence, 261 residues long: Cytochrome c oxidase subunit 3 (261 aa).

Residues 1–15 (MTHQTHAYHMVNPSP) are Mitochondrial matrix-facing. The chain crosses the membrane as a helical span at residues 16–34 (WPLTGALSALLMTSGLIMW). Topologically, residues 35 to 40 (FHFNSM) are mitochondrial intermembrane. The helical transmembrane segment at 41–66 (YLLMLGLTTNTLTMYQWWRDIVREST) threads the bilayer. Topologically, residues 67–72 (FQGHHT) are mitochondrial matrix. The helical transmembrane segment at 73-105 (PIVQKGLRYGMILFIVSEVFFFAGFFWAFYHSS) threads the bilayer. At 106 to 128 (LAPTPELGGCWPPTGITPLNPME) the chain is on the mitochondrial intermembrane side. The chain crosses the membrane as a helical span at residues 129-152 (VPLLNTSVLLASGVSITWAHHSLM). At 153-155 (EGN) the chain is on the mitochondrial matrix side. Residues 156–183 (RKHMLQALFITISLGIYFTLLQASEYYE) form a helical membrane-spanning segment. Residues 184–190 (TPFTISD) are Mitochondrial intermembrane-facing. Residues 191–223 (GIYGSTFFMATGFHGLHVIIGSTFLIVCFVRQL) form a helical membrane-spanning segment. Topologically, residues 224–232 (KFHFTSNHH) are mitochondrial matrix. Residues 233–256 (FGFEAAAWYWHFVDVVWLFLYVSI) traverse the membrane as a helical segment. Residues 257-261 (YWWGS) lie on the Mitochondrial intermembrane side of the membrane.

Belongs to the cytochrome c oxidase subunit 3 family. As to quaternary structure, component of the cytochrome c oxidase (complex IV, CIV), a multisubunit enzyme composed of 14 subunits. The complex is composed of a catalytic core of 3 subunits MT-CO1, MT-CO2 and MT-CO3, encoded in the mitochondrial DNA, and 11 supernumerary subunits COX4I, COX5A, COX5B, COX6A, COX6B, COX6C, COX7A, COX7B, COX7C, COX8 and NDUFA4, which are encoded in the nuclear genome. The complex exists as a monomer or a dimer and forms supercomplexes (SCs) in the inner mitochondrial membrane with NADH-ubiquinone oxidoreductase (complex I, CI) and ubiquinol-cytochrome c oxidoreductase (cytochrome b-c1 complex, complex III, CIII), resulting in different assemblies (supercomplex SCI(1)III(2)IV(1) and megacomplex MCI(2)III(2)IV(2)).

The protein localises to the mitochondrion inner membrane. It catalyses the reaction 4 Fe(II)-[cytochrome c] + O2 + 8 H(+)(in) = 4 Fe(III)-[cytochrome c] + 2 H2O + 4 H(+)(out). Component of the cytochrome c oxidase, the last enzyme in the mitochondrial electron transport chain which drives oxidative phosphorylation. The respiratory chain contains 3 multisubunit complexes succinate dehydrogenase (complex II, CII), ubiquinol-cytochrome c oxidoreductase (cytochrome b-c1 complex, complex III, CIII) and cytochrome c oxidase (complex IV, CIV), that cooperate to transfer electrons derived from NADH and succinate to molecular oxygen, creating an electrochemical gradient over the inner membrane that drives transmembrane transport and the ATP synthase. Cytochrome c oxidase is the component of the respiratory chain that catalyzes the reduction of oxygen to water. Electrons originating from reduced cytochrome c in the intermembrane space (IMS) are transferred via the dinuclear copper A center (CU(A)) of subunit 2 and heme A of subunit 1 to the active site in subunit 1, a binuclear center (BNC) formed by heme A3 and copper B (CU(B)). The BNC reduces molecular oxygen to 2 water molecules using 4 electrons from cytochrome c in the IMS and 4 protons from the mitochondrial matrix. This Phoca vitulina (Harbor seal) protein is Cytochrome c oxidase subunit 3 (MT-CO3).